We begin with the raw amino-acid sequence, 261 residues long: Indole-3-glycerol phosphate synthase (261 aa).

Belongs to the TrpC family.

The catalysed reaction is 1-(2-carboxyphenylamino)-1-deoxy-D-ribulose 5-phosphate + H(+) = (1S,2R)-1-C-(indol-3-yl)glycerol 3-phosphate + CO2 + H2O. It functions in the pathway amino-acid biosynthesis; L-tryptophan biosynthesis; L-tryptophan from chorismate: step 4/5. This Campylobacter hominis (strain ATCC BAA-381 / DSM 21671 / CCUG 45161 / LMG 19568 / NCTC 13146 / CH001A) protein is Indole-3-glycerol phosphate synthase.